The following is a 68-amino-acid chain: MKAIISLLLISAMVFSMIEAVPLEEGLQLFEGERGCLPHNRFCNALSGPRCCSGLTCKELNIWASKCL.

Positions 1–20 (MKAIISLLLISAMVFSMIEA) are cleaved as a signal peptide. Positions 21–34 (VPLEEGLQLFEGER) are excised as a propeptide. Disulfide bonds link C36-C52, C43-C57, and C51-C67.

This sequence belongs to the neurotoxin 01 (U2-agtx) family. Expressed by the venom gland.

It localises to the secreted. Its function is as follows. Insect active toxin causing rapid but reversible paralysis in crickets. No activity shown in mammals. Does not show effect on mammalian voltage-gated calcium channels. In Agelena orientalis (Funnel-web spider), this protein is U2-agatoxin-Ao1u.